Here is a 266-residue protein sequence, read N- to C-terminus: Calpain small subunit 1 (266 aa).

Residue Met-1 is modified to N-acetylmethionine. The residue at position 6 (Ser-6) is a Phosphoserine. Residues 94-128 (EEVRQFRRLFAQLAGDDMEVSATELMNILNKVVTR) enclose the EF-hand 1; atypical domain. Positions 107, 110, 112, 117, 135, 150, 152, 154, 156, and 161 each coordinate Ca(2+). EF-hand domains follow at residues 137–170 (FGLDTCRSMVAVMDSDTTGKLGFEEFKYLWNNIK), 167–202 (NNIKKWQAIYKQFDVDRSGTICSRELPGAFEAAGFH), 203–231 (LNEHLYNMIIRRYSDEAGNMDFDNFISCL), and 232–266 (VRLDAMFRAFKSLDKDGTGQIQVNIQEWLQLTMYS). An N6-acetyllysine modification is found at Lys-177. Ca(2+)-binding residues include Asp-180, Asp-182, Ser-184, Thr-186, Glu-191, and Asp-223.

Homodimer or heterodimer of a large (catalytic) and a small (regulatory) subunit. In presence of calcium, the heterodimer dissociates. In terms of processing, the N-terminus is blocked.

It localises to the cytoplasm. The protein localises to the cell membrane. Regulatory subunit of the calcium-regulated non-lysosomal thiol-protease which catalyzes limited proteolysis of substrates involved in cytoskeletal remodeling and signal transduction. Essential for embryonic development. This Oryctolagus cuniculus (Rabbit) protein is Calpain small subunit 1 (CAPNS1).